A 182-amino-acid polypeptide reads, in one-letter code: Thioredoxin X, chloroplastic (182 aa).

The transit peptide at 1–67 (MDSIVSSSTI…TRKSSSSVIR (67 aa)) directs the protein to the chloroplast. Residues 68–177 (CGGIKEIGES…LKEYIDGLLN (110 aa)) form the Thioredoxin domain. Residues Cys99 and Cys102 each act as nucleophile in the active site. Residues Cys99 and Cys102 are joined by a disulfide bond.

It belongs to the thioredoxin family. Predominantly expressed in leaves.

It is found in the plastid. The protein resides in the chloroplast stroma. Probable thiol-disulfide oxidoreductase that may participate in various redox reactions. This Arabidopsis thaliana (Mouse-ear cress) protein is Thioredoxin X, chloroplastic (ATHX).